A 501-amino-acid polypeptide reads, in one-letter code: Pyruvate dehydrogenase protein X component, mitochondrial (501 aa).

The transit peptide at 1–53 (MAASWRLHCNQPLLRYLLGFSSRRSLGLAQGAAAWPVDRGASWRWFHSTQLLQ) directs the protein to the mitochondrion. Residues 56–132 (PIKVLMPSLS…QLGSLIALMV (77 aa)) form the Lipoyl-binding domain. Residue Lys97 is modified to N6-lipoyllysine. Residues 145 to 176 (KDVSAPPPVSKPPAPTQPSPQPQIPCPARKEH) form a disordered region. The segment covering 149 to 169 (APPPVSKPPAPTQPSPQPQIP) has biased composition (pro residues). The Peripheral subunit-binding (PSBD) domain occupies 183-220 (RLSPAARNILEKHSLDASQGTATGPRGIFTKEDALKLV). N6-acetyllysine is present on Lys194. The residue at position 196 (Ser196) is a Phosphoserine. A disordered region spans residues 228 to 256 (ITESRPASAPPPSLSASVPPQATAGPSYP). An N6-succinyllysine modification is found at Lys394.

Belongs to the 2-oxoacid dehydrogenase family. Part of the inner core of the multimeric pyruvate dehydrogenase complex that is composed of about 48 DLAT and 12 PDHX molecules. This core binds multiple copies of pyruvate dehydrogenase (subunits PDH1A and PDHB, E1), dihydrolipoamide acetyltransferase (DLAT, E2) and lipoamide dehydrogenase (DLD, E3). Interacts with SIRT4. Interacts with DLD. In terms of processing, delipoylated at Lys-97 by SIRT4, delipoylation decreases the PHD complex activity.

The protein resides in the mitochondrion matrix. In terms of biological role, required for anchoring dihydrolipoamide dehydrogenase (E3) to the dihydrolipoamide transacetylase (E2) core of the pyruvate dehydrogenase complexes of eukaryotes. This specific binding is essential for a functional PDH complex. This is Pyruvate dehydrogenase protein X component, mitochondrial (Pdhx) from Mus musculus (Mouse).